Consider the following 219-residue polypeptide: LHFPL tetraspan subfamily member 5 protein (219 aa).

Residues 1 to 24 lie on the Cytoplasmic side of the membrane; the sequence is MVKLLPAQEAAKIYHTNYVRNSRA. The chain crosses the membrane as a helical span at residues 25–45; it reads VGVMWGTLTICFSVLVMALFI. The Extracellular segment spans residues 46–98; sequence QPYWIGDSVSTPQAGYFGLFSYCVGNVLSSELICKGGPLDFSSIPSRAFKTAM. A helical transmembrane segment spans residues 99-119; that stretch reads FFVALAMFLIIGSIICFSLFF. The Cytoplasmic segment spans residues 120–128; it reads VCNTATVYK. The helical transmembrane segment at 129–149 threads the bilayer; it reads ICAWMQLAAATGLMIGCLVYP. Over 150-178 the chain is Extracellular; it reads DGWDSSEVRRMCGEQTGKYTLGHCTIRWA. The chain crosses the membrane as a helical span at residues 179 to 199; sequence FMLAILSIGDALILSFLAFVL. At 200–219 the chain is on the cytoplasmic side; it reads GYRQDKLLPDDYKADGNEEV.

Belongs to the LHFP family. Forms the MET channel composed of TMC (TMC1 or TMC2), TMIE, TOMT, CIB (CIB2 or CIB3), LHPL5 and PCDH15. Interaction with PCDH15 is required for efficient localization to hair bundles.

It is found in the cell membrane. Auxiliary subunit of the mechanotransducer (MET) non-specific cation channel complex located at the tips of the shorter stereocilia of cochlear hair cells and that mediates sensory transduction in the auditory system. The MET complex is composed of two dimeric pore-forming ion-conducting transmembrane TMC (TMC1 or TMC2) subunits, and aided by several auxiliary proteins including LHFPL5, TMIE, CIB2/3 and TOMT, and the tip-link PCDH15. Functionally couples PCDH15 to the transduction channel. This chain is LHFPL tetraspan subfamily member 5 protein, found in Rattus norvegicus (Rat).